The chain runs to 294 residues: Eukaryotic translation initiation factor 3 subunit G (294 aa).

Residues 1-22 (MQTFHHQDTGSEDFRQNTMDEK) show a composition bias toward basic and acidic residues. Disordered stretches follow at residues 1–42 (MQTF…DGTK) and 164–211 (GGMG…SDDD). Residues 30–42 (STPQITQNADGTK) show a composition bias toward polar residues. Residues 193-205 (GPGGPGGPGGAAG) are compositionally biased toward gly residues. The RRM domain occupies 214-292 (LTLRVTNLSE…LIMKVDYSKK (79 aa)).

This sequence belongs to the eIF-3 subunit G family. Component of the eukaryotic translation initiation factor 3 (eIF-3) complex.

It localises to the cytoplasm. Its function is as follows. RNA-binding component of the eukaryotic translation initiation factor 3 (eIF-3) complex, which is involved in protein synthesis of a specialized repertoire of mRNAs and, together with other initiation factors, stimulates binding of mRNA and methionyl-tRNAi to the 40S ribosome. The eIF-3 complex specifically targets and initiates translation of a subset of mRNAs involved in cell proliferation. This subunit can bind 18S rRNA. In Yarrowia lipolytica (strain CLIB 122 / E 150) (Yeast), this protein is Eukaryotic translation initiation factor 3 subunit G.